Reading from the N-terminus, the 1880-residue chain is Gag-Pro-Pol polyprotein (1880 aa).

Residue glycine 2 is the site of N-myristoyl glycine; by host attachment. Disordered stretches follow at residues 115–208 (HSRP…DQLN), 323–376 (SQGQ…THSY), and 446–469 (AERT…SPYQ). Composition is skewed to polar residues over residues 117–132 (RPPS…TSEK), 193–206 (NSKT…QDDQ), and 323–334 (SQGQVSSNTTGR). Acidic residues predominate over residues 346-366 (EEEEADSGESDSEDDEEESSE). A compositionally biased stretch (basic and acidic residues) spans 446 to 459 (AERTRVRPPPKDGP). Residues 863 to 939 (FSGILDTGAD…LPVNLWGRDI (77 aa)) form the Peptidase A2 domain. The active-site Protease; shared with dimeric partner is aspartate 868. The 47-residue stretch at 950–996 (PNDTVMTQMLSQGYLPGQGLGKNNQGITQPITITPKKDKTGLGFHQN) folds into the G-patch domain. A Reverse transcriptase domain is found at 1044–1232 (LAAGHIEPTN…EPFSYLGFEL (189 aa)). 7 residues coordinate Mg(2+): aspartate 1109, aspartate 1184, aspartate 1185, aspartate 1464, glutamate 1493, aspartate 1514, and aspartate 1578. In terms of domain architecture, RNase H type-1 spans 1455 to 1586 (IPQATLVFTD…ADAATQIFPI (132 aa)). The segment at 1589–1630 (DPIHEATQAHTLHHLNAHTLRLLYKITREQARDIVKACKQCV) adopts an Integrase-type zinc-finger fold. Residues histidine 1598, histidine 1602, cysteine 1626, and cysteine 1629 each coordinate Zn(2+). An Integrase catalytic domain is found at 1643–1804 (RGLVPNAIWQ…AADRLWHPQT (162 aa)). Mg(2+) contacts are provided by aspartate 1654, aspartate 1711, and glutamate 1747. The integrase-type DNA-binding region spans 1809 to 1858 (ATVMWRDPLTSVWKGPDPVLIWGRGSACIYDQKEDGPRWLPERLIRHINN). Residues 1859-1880 (QTAPLCDRPSNPNTAPGPKGSP) are disordered.

Homodimer. In terms of assembly, interacts with the G-patch peptide. As to quaternary structure, interacts with the reverse transcriptase/ribonuclease H. Homotrimer. The cofactor is Mg(2+). In terms of processing, myristoylated. Myristoylation of the matrix (MA) domain mediates the transport and binding of Gag polyproteins to the host plasma membrane and is required for the assembly of viral particles. Post-translationally, specific enzymatic cleavages in vivo yield mature proteins. Released by autocatalytic processing. The protease can undergo further autoprocessing to yield 2 shorter but enzymatically active forms of 12 kDa and 13 kDa.

The protein localises to the virion. The catalysed reaction is DNA(n) + a 2'-deoxyribonucleoside 5'-triphosphate = DNA(n+1) + diphosphate. The enzyme catalyses Endonucleolytic cleavage to 5'-phosphomonoester.. It catalyses the reaction dUTP + H2O = dUMP + diphosphate + H(+). Matrix protein. Functionally, capsid protein. Its function is as follows. Matrix protein p10: Matrix protein. In terms of biological role, nucleocapsid protein p14: Nucleocapsid protein. Capsid protein p27: capsid protein. Functionally, the aspartyl protease mediates proteolytic cleavages of Gag and Gag-Pol polyproteins during or shortly after the release of the virion from the plasma membrane. Cleavages take place as an ordered, step-wise cascade to yield mature proteins. This process is called maturation. Displays maximal activity during the budding process just prior to particle release from the cell. Its function is as follows. Enhances the activity of the reverse transcriptase. May be part of the mature RT. In terms of biological role, RT is a multifunctional enzyme that converts the viral dimeric RNA genome into dsDNA in the cytoplasm, shortly after virus entry into the cell. This enzyme displays a DNA polymerase activity that can copy either DNA or RNA templates, and a ribonuclease H (RNase H) activity that cleaves the RNA strand of RNA-DNA heteroduplexes in a partially processive 3' to 5' endonucleasic mode. Conversion of viral genomic RNA into dsDNA requires many steps. A tRNA binds to the primer-binding site (PBS) situated at the 5' end of the viral RNA. RT uses the 3' end of the tRNA primer to perfom a short round of RNA-dependent minus-strand DNA synthesis. The reading proceeds through the U5 region and ends after the repeated (R) region which is present at both ends of viral RNA. The portion of the RNA-DNA heteroduplex is digested by the RNase H, resulting in a ssDNA product attached to the tRNA primer. This ssDNA/tRNA hybridizes with the identical R region situated at the 3' end of viral RNA. This template exchange, known as minus-strand DNA strong stop transfer, can be either intra- or intermolecular. RT uses the 3' end of this newly synthesized short ssDNA to perfom the RNA-dependent minus-strand DNA synthesis of the whole template. RNase H digests the RNA template except for a polypurine tract (PPT) situated at the 5' end of the genome. It is not clear if both polymerase and RNase H activities are simultaneous. RNase H probably can proceed both in a polymerase-dependent (RNA cut into small fragments by the same RT performing DNA synthesis) and a polymerase-independent mode (cleavage of remaining RNA fragments by free RTs). Secondly, RT performs DNA-directed plus-strand DNA synthesis using the PPT that has not been removed by RNase H as primers. PPT and tRNA primers are then removed by RNase H. The 3' and 5' ssDNA PBS regions hybridize to form a circular dsDNA intermediate. Strand displacement synthesis by RT to the PBS and PPT ends produces a blunt ended, linear dsDNA copy of the viral genome that includes long terminal repeats (LTRs) at both ends. Catalyzes viral DNA integration into the host chromosome, by performing a series of DNA cutting and joining reactions. This is Gag-Pro-Pol polyprotein (pol) from Mammalia (SMRV-H).